The primary structure comprises 250 residues: 5-oxoprolinase subunit A (250 aa).

It belongs to the LamB/PxpA family. In terms of assembly, forms a complex composed of PxpA, PxpB and PxpC.

It carries out the reaction 5-oxo-L-proline + ATP + 2 H2O = L-glutamate + ADP + phosphate + H(+). Catalyzes the cleavage of 5-oxoproline to form L-glutamate coupled to the hydrolysis of ATP to ADP and inorganic phosphate. The sequence is that of 5-oxoprolinase subunit A from Thermus thermophilus (strain ATCC BAA-163 / DSM 7039 / HB27).